The following is a 347-amino-acid chain: Heat-inducible transcription repressor HrcA (347 aa).

It belongs to the HrcA family.

Functionally, negative regulator of class I heat shock genes (grpE-dnaK-dnaJ and groELS operons). Prevents heat-shock induction of these operons. In Lactococcus lactis subsp. cremoris (strain SK11), this protein is Heat-inducible transcription repressor HrcA.